The chain runs to 156 residues: Transcriptional regulator MraZ (156 aa).

2 SpoVT-AbrB domains span residues 7–54 (NIEV…PESV) and 84–127 (VEVV…AKER).

It belongs to the MraZ family. As to quaternary structure, forms oligomers.

The protein localises to the cytoplasm. Its subcellular location is the nucleoid. The sequence is that of Transcriptional regulator MraZ from Bacteroides thetaiotaomicron (strain ATCC 29148 / DSM 2079 / JCM 5827 / CCUG 10774 / NCTC 10582 / VPI-5482 / E50).